The primary structure comprises 226 residues: Thioredoxin domain-containing protein 9 (226 aa).

One can recognise a Thioredoxin domain in the interval 52–180 (LEALKKAQQQ…TTETLEWRLG (129 aa)). Ser188, Ser221, and Ser223 each carry phosphoserine.

In terms of assembly, forms ternary complexes with the chaperonin TCP1 complex, spanning the cylindrical chaperonin cavity and contacting at least 2 subunits.

The protein localises to the cytoplasm. It is found in the nucleus. It localises to the cytoskeleton. The protein resides in the microtubule organizing center. Its subcellular location is the centrosome. The protein localises to the midbody. In terms of biological role, significantly diminishes the chaperonin TCP1 complex ATPase activity, thus negatively impacts protein folding, including that of actin or tubulin. This chain is Thioredoxin domain-containing protein 9 (TXNDC9), found in Bos taurus (Bovine).